Here is a 976-residue protein sequence, read N- to C-terminus: Metabotropic glutamate receptor (976 aa).

A signal peptide spans 1 to 25 (MKQKNNNGTILVVVMVLSWSRVVDL). The Extracellular segment spans residues 26–626 (KSPSNTHTQD…IQYMKWNSLF (601 aa)). Asn-112 and Asn-143 each carry an N-linked (GlcNAc...) asparagine glycan. L-glutamate-binding positions include Ser-158 and 179–181 (AST). N-linked (GlcNAc...) asparagine glycosylation occurs at Asn-216. Tyr-229 lines the L-glutamate pocket. Asn-299 carries an N-linked (GlcNAc...) asparagine glycan. Asp-310 is an L-glutamate binding site. The N-linked (GlcNAc...) asparagine glycan is linked to Asn-386. Lys-417 lines the L-glutamate pocket. Residues Asn-491 and Asn-524 are each glycosylated (N-linked (GlcNAc...) asparagine). Residues 627–649 (ALIPMAIAIFGIALTSIVIVLFA) traverse the membrane as a helical segment. At 650–663 (KNHDTPLVRASGRE) the chain is on the cytoplasmic side. The helical transmembrane segment at 664 to 684 (LSYTLLFGILVCYCNTFALIA) threads the bilayer. At 685–695 (KPTIGSCVLQR) the chain is on the extracellular side. Residues 696–714 (FGIGVGFSIIYSALLTKTN) form a helical membrane-spanning segment. At 715–738 (RISRIFHSASKSAQRLKYISPQSQ) the chain is on the cytoplasmic side. Residues 739-759 (VVITTSLIAIQVLITMIWMVV) traverse the membrane as a helical segment. Over 760-782 (EPPGTRFYYPDRREVILKCKIQD) the chain is Extracellular. A helical transmembrane segment spans residues 783-804 (MSFLFSQLYNMILITICTIYAI). The Cytoplasmic segment spans residues 805-817 (KTRKIPENFNESK). The chain crosses the membrane as a helical span at residues 818–840 (FIGFTMYTTCIIWLAFVPIYFGT). At 841–850 (GNSYEVQTTT) the chain is on the extracellular side. The helical transmembrane segment at 851 to 876 (LCISISLSASVALVCLYSPKVYILVF) threads the bilayer. Over 877–976 (HPDKNVRKLT…VEPICHIVNK (100 aa)) the chain is Cytoplasmic. The disordered stretch occupies residues 920 to 946 (LTGGAVGTNASSSTLPTQNSPHLDEAS). Residues 927–946 (TNASSSTLPTQNSPHLDEAS) show a composition bias toward polar residues.

It belongs to the G-protein coupled receptor 3 family. As to expression, expressed in the neurons of the larval CNS from the beginning of the first until the third instar. Expression in the third-instar larval CNS is restricted to a discrete number of somas and projections in the brain lobes and in the ventral ganglion. In the ventral nerve cord, expression is detected both in somas and projections. Expressed in the antennal lobes, the optic lobes, the central complex and the median bundle in the adult CNS.

The protein resides in the cell membrane. G-protein coupled receptor for glutamate. Ligand binding causes a conformation change that triggers signaling via guanine nucleotide-binding proteins (G proteins) and modulates the activity of down-stream effectors. The chain is Metabotropic glutamate receptor (mGluR) from Drosophila melanogaster (Fruit fly).